The following is an 831-amino-acid chain: Phenylalanine--tRNA ligase beta subunit (831 aa).

One can recognise a tRNA-binding domain in the interval 44 to 155 (GPVDGPVTVG…GAAEPGADGA (112 aa)). The B5 domain maps to 414 to 489 (WSPPPIRMGV…RLEGLEVIPS (76 aa)). Positions 467, 473, 476, and 477 each coordinate Mg(2+). One can recognise an FDX-ACB domain in the interval 737–830 (SPYPAVFQDV…AAERVGAVLR (94 aa)).

Belongs to the phenylalanyl-tRNA synthetase beta subunit family. Type 1 subfamily. In terms of assembly, tetramer of two alpha and two beta subunits. The cofactor is Mg(2+).

The protein resides in the cytoplasm. It carries out the reaction tRNA(Phe) + L-phenylalanine + ATP = L-phenylalanyl-tRNA(Phe) + AMP + diphosphate + H(+). The protein is Phenylalanine--tRNA ligase beta subunit of Mycobacterium bovis (strain ATCC BAA-935 / AF2122/97).